The sequence spans 419 residues: Serine hydroxymethyltransferase (419 aa).

Residues Leu121 and 125 to 127 (GHL) contribute to the (6S)-5,6,7,8-tetrahydrofolate site. At Lys231 the chain carries N6-(pyridoxal phosphate)lysine.

Belongs to the SHMT family. In terms of assembly, homodimer. Pyridoxal 5'-phosphate serves as cofactor.

The protein localises to the cytoplasm. The catalysed reaction is (6R)-5,10-methylene-5,6,7,8-tetrahydrofolate + glycine + H2O = (6S)-5,6,7,8-tetrahydrofolate + L-serine. Its pathway is one-carbon metabolism; tetrahydrofolate interconversion. The protein operates within amino-acid biosynthesis; glycine biosynthesis; glycine from L-serine: step 1/1. Its function is as follows. Catalyzes the reversible interconversion of serine and glycine with tetrahydrofolate (THF) serving as the one-carbon carrier. This reaction serves as the major source of one-carbon groups required for the biosynthesis of purines, thymidylate, methionine, and other important biomolecules. Also exhibits THF-independent aldolase activity toward beta-hydroxyamino acids, producing glycine and aldehydes, via a retro-aldol mechanism. In Phytoplasma mali (strain AT), this protein is Serine hydroxymethyltransferase.